We begin with the raw amino-acid sequence, 476 residues long: Siroheme synthase 1 (476 aa).

Residues 1–203 (MDYLPIFADL…GQTAEAQRQL (203 aa)) are precorrin-2 dehydrogenase /sirohydrochlorin ferrochelatase. NAD(+)-binding positions include 22-23 (EV) and 43-44 (QS). At serine 128 the chain carries Phosphoserine. Residues 219 to 476 (GEIALVGAGP…VSRPAVVNLA (258 aa)) are uroporphyrinogen-III C-methyltransferase. Residue proline 228 coordinates S-adenosyl-L-methionine. Residue aspartate 251 is the Proton acceptor of the active site. Catalysis depends on lysine 273, which acts as the Proton donor. Residues 304–306 (GGD), isoleucine 309, 334–335 (TA), methionine 386, and glycine 415 contribute to the S-adenosyl-L-methionine site.

This sequence in the N-terminal section; belongs to the precorrin-2 dehydrogenase / sirohydrochlorin ferrochelatase family. It in the C-terminal section; belongs to the precorrin methyltransferase family.

It carries out the reaction uroporphyrinogen III + 2 S-adenosyl-L-methionine = precorrin-2 + 2 S-adenosyl-L-homocysteine + H(+). The catalysed reaction is precorrin-2 + NAD(+) = sirohydrochlorin + NADH + 2 H(+). It catalyses the reaction siroheme + 2 H(+) = sirohydrochlorin + Fe(2+). It functions in the pathway cofactor biosynthesis; adenosylcobalamin biosynthesis; precorrin-2 from uroporphyrinogen III: step 1/1. The protein operates within cofactor biosynthesis; adenosylcobalamin biosynthesis; sirohydrochlorin from precorrin-2: step 1/1. Its pathway is porphyrin-containing compound metabolism; siroheme biosynthesis; precorrin-2 from uroporphyrinogen III: step 1/1. It participates in porphyrin-containing compound metabolism; siroheme biosynthesis; siroheme from sirohydrochlorin: step 1/1. It functions in the pathway porphyrin-containing compound metabolism; siroheme biosynthesis; sirohydrochlorin from precorrin-2: step 1/1. Functionally, multifunctional enzyme that catalyzes the SAM-dependent methylations of uroporphyrinogen III at position C-2 and C-7 to form precorrin-2 via precorrin-1. Then it catalyzes the NAD-dependent ring dehydrogenation of precorrin-2 to yield sirohydrochlorin. Finally, it catalyzes the ferrochelation of sirohydrochlorin to yield siroheme. The chain is Siroheme synthase 1 from Serratia proteamaculans (strain 568).